A 284-amino-acid chain; its full sequence is MDAIKKKMQMLKLDKENALDRAEQAEADKKAAEDRSKQLEDELVSLQKKLKGTEDELDKYSEALKDAQEKLELAEKKATDAEADVASLNRRIQLVEEELDRAQERLATALQKLEEAEKAADESERGMKVIESRAQKDEEKMEIQEIQLKEAKHIAEDADRKYEEVARKLVIIESDLERAEERAELSEGKCAELEEELKTVTNNLKSLEAQAEKYSQKEDKYEEEIKVLSDKLKEAETRAEFAERSVTKLEKSIDDLEDELYAQKLKYKAISEELDHALNDMTSI.

N-acetylmethionine is present on M1. The segment at 1–38 (MDAIKKKMQMLKLDKENALDRAEQAEADKKAAEDRSKQ) is disordered. Positions 1–284 (MDAIKKKMQM…DHALNDMTSI (284 aa)) form a coiled coil. Residues 12–38 (KLDKENALDRAEQAEADKKAAEDRSKQ) show a composition bias toward basic and acidic residues. S45 bears the Phosphoserine mark. The disordered stretch occupies residues 116-136 (AEKAADESERGMKVIESRAQK). Residues S174, S186, S206, and S252 each carry the phosphoserine modification. Y261 is modified (phosphotyrosine). S271 and S283 each carry phosphoserine.

It belongs to the tropomyosin family. As to quaternary structure, homodimer. Heterodimer of an alpha (TPM1, TPM3 or TPM4) and a beta (TPM2) chain. Interacts with HRG (via the HRR domain); the interaction contributes to the antiangiogenic properties of the histidine/proline-rich region (HRR) of HRG. Interacts (via N-terminus) with LMOD2 (via N-terminus) and TMOD1 (via N-terminus). Phosphorylated at Ser-283 by DAPK1 in response to oxidative stress and this phosphorylation enhances stress fiber formation in endothelial cells.

Its subcellular location is the cytoplasm. It is found in the cytoskeleton. Binds to actin filaments in muscle and non-muscle cells. Plays a central role, in association with the troponin complex, in the calcium dependent regulation of vertebrate striated muscle contraction. Smooth muscle contraction is regulated by interaction with caldesmon. In non-muscle cells is implicated in stabilizing cytoskeleton actin filaments. The sequence is that of Tropomyosin alpha-1 chain (Tpm1) from Mus musculus (Mouse).